A 100-amino-acid chain; its full sequence is Large ribosomal subunit protein uL23 (100 aa).

The protein belongs to the universal ribosomal protein uL23 family. Part of the 50S ribosomal subunit. Contacts protein L29, and trigger factor when it is bound to the ribosome.

One of the early assembly proteins it binds 23S rRNA. One of the proteins that surrounds the polypeptide exit tunnel on the outside of the ribosome. Forms the main docking site for trigger factor binding to the ribosome. The sequence is that of Large ribosomal subunit protein uL23 from Synechococcus sp. (strain RCC307).